We begin with the raw amino-acid sequence, 445 residues long: Nuclear envelope integral membrane protein 1 (445 aa).

The first 44 residues, 1–44 (MAGGMKVAVLPAVGAGPWSWGAGGCGAVRLLLVLFGCFVCGSAG), serve as a signal peptide directing secretion. N125 is a glycosylation site (N-linked (GlcNAc...) asparagine). Helical transmembrane passes span 161 to 181 (PKLFLIFLLGLTLFFCGDLLS), 186 to 206 (FYYSTGMSVGIVASLLIIIFI), 216 to 236 (PIYIILVGGWSFSLYLIQLVF), 245 to 265 (CYWQYLLSYVLAVGFMSFAVC), and 289 to 309 (LCFMYSSIQIPHIALAIVVIA). The a; required for its colocalization with lamins at the nuclear envelope stretch occupies residues 186 to 297 (FYYSTGMSVG…GLCFMYSSIQ (112 aa)). The b; required for interaction with RAN-GTP stretch occupies residues 336–405 (TVPPRLLTEE…LTPNEVSVHE (70 aa)). A required for nuclear localization region spans residues 336–445 (TVPPRLLTEE…LVVQQNSFLT (110 aa)). Phosphoserine occurs at positions 368, 424, and 425. Positions 418 to 430 (ELSEETSSEEEDS) are enriched in acidic residues. Residues 418 to 445 (ELSEETSSEEEDSDSRYPLVVQQNSFLT) are disordered.

This sequence belongs to the NEMP family. As to quaternary structure, homooligomer. Interacts with RAN-GTP. Interacts with EMD. In terms of processing, phosphorylation may regulate its interaction with RAN-GTP.

It is found in the nucleus inner membrane. The protein resides in the nucleus envelope. Its function is as follows. Together with EMD, contributes to nuclear envelope stiffness in germ cells. Required for female fertility. Essential for normal erythropoiesis. Required for efficient nuclear envelope opening and enucleation during the late stages of erythroblast maturation. In Bos taurus (Bovine), this protein is Nuclear envelope integral membrane protein 1 (NEMP1).